Consider the following 306-residue polypeptide: Elongation factor Ts (306 aa).

Positions 80-83 (TDFV) are involved in Mg(2+) ion dislocation from EF-Tu.

This sequence belongs to the EF-Ts family.

The protein localises to the cytoplasm. Functionally, associates with the EF-Tu.GDP complex and induces the exchange of GDP to GTP. It remains bound to the aminoacyl-tRNA.EF-Tu.GTP complex up to the GTP hydrolysis stage on the ribosome. This Leptothrix cholodnii (strain ATCC 51168 / LMG 8142 / SP-6) (Leptothrix discophora (strain SP-6)) protein is Elongation factor Ts.